We begin with the raw amino-acid sequence, 103 residues long: Large ribosomal subunit protein bL21 (103 aa).

The protein belongs to the bacterial ribosomal protein bL21 family. In terms of assembly, part of the 50S ribosomal subunit. Contacts protein L20.

Its function is as follows. This protein binds to 23S rRNA in the presence of protein L20. The sequence is that of Large ribosomal subunit protein bL21 from Clostridium kluyveri (strain NBRC 12016).